We begin with the raw amino-acid sequence, 112 residues long: T cell receptor alpha variable 41 (112 aa).

Positions 1-21 (MVKIRQFLLAILWLQLSCVSA) are cleaved as a signal peptide. The Ig-like domain occupies 24–112 (NEVEQSPQNL…DSAVYICAVR (89 aa)). 2 N-linked (GlcNAc...) asparagine glycosylation sites follow: Asn-32 and Asn-44. A disulfide bridge connects residues Cys-45 and Cys-109.

Alpha-beta TR is a heterodimer composed of an alpha and beta chain; disulfide-linked. The alpha-beta TR is associated with the transmembrane signaling CD3 coreceptor proteins to form the TR-CD3 (TcR or TCR). The assembly of alpha-beta TR heterodimers with CD3 occurs in the endoplasmic reticulum where a single alpha-beta TR heterodimer associates with one CD3D-CD3E heterodimer, one CD3G-CD3E heterodimer and one CD247 homodimer forming a stable octameric structure. CD3D-CD3E and CD3G-CD3E heterodimers preferentially associate with TR alpha and TR beta chains, respectively. The association of the CD247 homodimer is the last step of TcR assembly in the endoplasmic reticulum and is required for transport to the cell surface.

It is found in the cell membrane. In terms of biological role, v region of the variable domain of T cell receptor (TR) alpha chain that participates in the antigen recognition. Alpha-beta T cell receptors are antigen specific receptors which are essential to the immune response and are present on the cell surface of T lymphocytes. Recognize peptide-major histocompatibility (MH) (pMH) complexes that are displayed by antigen presenting cells (APC), a prerequisite for efficient T cell adaptive immunity against pathogens. Binding of alpha-beta TR to pMH complex initiates TR-CD3 clustering on the cell surface and intracellular activation of LCK that phosphorylates the ITAM motifs of CD3G, CD3D, CD3E and CD247 enabling the recruitment of ZAP70. In turn ZAP70 phosphorylates LAT, which recruits numerous signaling molecules to form the LAT signalosome. The LAT signalosome propagates signal branching to three major signaling pathways, the calcium, the mitogen-activated protein kinase (MAPK) kinase and the nuclear factor NF-kappa-B (NF-kB) pathways, leading to the mobilization of transcription factors that are critical for gene expression and essential for T cell growth and differentiation. The T cell repertoire is generated in the thymus, by V-(D)-J rearrangement. This repertoire is then shaped by intrathymic selection events to generate a peripheral T cell pool of self-MH restricted, non-autoaggressive T cells. Post-thymic interaction of alpha-beta TR with the pMH complexes shapes TR structural and functional avidity. The protein is T cell receptor alpha variable 41 of Homo sapiens (Human).